The following is a 377-amino-acid chain: Nitric oxide reductase FlRd-NAD(+) reductase (377 aa).

The protein belongs to the FAD-dependent oxidoreductase family. FAD is required as a cofactor.

It localises to the cytoplasm. It carries out the reaction 2 reduced [nitric oxide reductase rubredoxin domain] + NAD(+) + H(+) = 2 oxidized [nitric oxide reductase rubredoxin domain] + NADH. The protein operates within nitrogen metabolism; nitric oxide reduction. Functionally, one of at least two accessory proteins for anaerobic nitric oxide (NO) reductase. Reduces the rubredoxin moiety of NO reductase. In Shigella sonnei (strain Ss046), this protein is Nitric oxide reductase FlRd-NAD(+) reductase.